The following is a 513-amino-acid chain: Zinc finger protein RFP (513 aa).

The segment at 16–57 (CPVCLQYFAEPMMLDCGHNICCACLARCWGTAETNVSCPQCR) adopts an RING-type zinc-finger fold. Zn(2+)-binding residues include cysteine 96, histidine 99, cysteine 118, and histidine 124. A B box-type zinc finger spans residues 96–127 (CEKHREPLKLYCEEDQMPICVVCDRSREHRGH). Coiled-coil stretches lie at residues 132–172 (LEEA…AELL) and 282–311 (QKCL…LREA). The B30.2/SPRY domain maps to 298–492 (MQSDMEKIQE…SAAPLIICPM (195 aa)).

The protein belongs to the TRIM/RBCC family. As to quaternary structure, homomultimerizes. Part of a complex consisting of TRIM27, USP7 and MAGEL2; directly interacts with USP7. Interacts with PML, EIF3S6, EPC1, CHD4 and EID1. Interacts with MAGED4, MAGEF1 and MAGEL2. Interacts with PTPN11. Interacts with autophagy receptor p62/SQSTM1. (Microbial infection) Interacts with M.tuberculosis PtpA, whick blocks TRIM27-promoted JNK/p38 MAPK pathway activation and cell apoptosis. In terms of assembly, (Microbial infection) Interacts with herpes simplex virus protein ICP0. In terms of tissue distribution, expressed in testis namely within the seminiferous tubules.

It localises to the nucleus. The protein localises to the cytoplasm. The protein resides in the PML body. It is found in the early endosome. Its subcellular location is the mitochondrion. It catalyses the reaction S-ubiquitinyl-[E2 ubiquitin-conjugating enzyme]-L-cysteine + [acceptor protein]-L-lysine = [E2 ubiquitin-conjugating enzyme]-L-cysteine + N(6)-ubiquitinyl-[acceptor protein]-L-lysine.. It functions in the pathway protein modification; protein ubiquitination. In terms of biological role, E3 ubiquitin-protein ligase that mediates ubiquitination of various substrates and thereby plays a role in diffent processes including proliferation, innate immunity, apoptosis, immune response or autophagy. Ubiquitinates PIK3C2B and inhibits its activity by mediating the formation of 'Lys-48'-linked polyubiquitin chains; the function inhibits CD4 T-cell activation. Acts as a regulator of retrograde transport: together with MAGEL2, mediates the formation of 'Lys-63'-linked polyubiquitin chains at 'Lys-220' of WASHC1, leading to promote endosomal F-actin assembly. Has a transcriptional repressor activity by cooperating with EPC1. Induces apoptosis by activating Jun N-terminal kinase and p38 kinase and also increases caspase-3-like activity independently of mitochondrial events. May function in male germ cell development. Has DNA-binding activity and preferentially bound to double-stranded DNA. Forms a complex with and ubiquitinates the ubiquitin-specific protease USP7, which in turn deubiquitinates RIPK1 resulting in the positive regulation of TNF-alpha-induced apoptosis. In addition, acts with USP7 or PTPN11 as an inhibitor of the antiviral signaling pathway by promoting kinase TBK1 ubiquitination and degradation. Acts as a negative regulator of NOD2 signaling by mediating ubiquitination of NOD2, promoting its degradation by the proteasome. Alternatively, facilitates mitophagy via stabilization of active TBK1. Negatively regulates autophagy flux under basal conditions by directly polyubiquitinating ULK1. During starvation-induced autophagy, catalyzes non-degradative ubiquitination of the kinase STK38L promoting its activation and phosphorylation of ULK1 leading to its ubiquitination and degradation to restrain the amplitude and duration of autophagy. Its function is as follows. (Microbial infection) Positively regulates hepatitis C virus replication by suppressing type I IFN response during infection. This chain is Zinc finger protein RFP, found in Homo sapiens (Human).